The following is a 145-amino-acid chain: Deoxyuridine 5'-triphosphate nucleotidohydrolase (145 aa).

Substrate-binding positions include 63 to 65 (RSG), Gln76, and 80 to 82 (TVD).

Belongs to the dUTPase family. It depends on Mg(2+) as a cofactor.

It catalyses the reaction dUTP + H2O = dUMP + diphosphate + H(+). It participates in pyrimidine metabolism; dUMP biosynthesis; dUMP from dCTP (dUTP route): step 2/2. This enzyme is involved in nucleotide metabolism: it produces dUMP, the immediate precursor of thymidine nucleotides and it decreases the intracellular concentration of dUTP so that uracil cannot be incorporated into DNA. This is Deoxyuridine 5'-triphosphate nucleotidohydrolase from Chlamydia trachomatis serovar L2 (strain ATCC VR-902B / DSM 19102 / 434/Bu).